Consider the following 108-residue polypeptide: UPF0235 protein Rpal_0418 (108 aa).

It belongs to the UPF0235 family.

This chain is UPF0235 protein Rpal_0418, found in Rhodopseudomonas palustris (strain TIE-1).